Consider the following 269-residue polypeptide: 4-hydroxy-tetrahydrodipicolinate reductase (269 aa).

NAD(+) is bound by residues 8–13 and glutamate 34; that span reads GAAGRM. Residue arginine 35 participates in NADP(+) binding. Residues 98–100 and 122–125 contribute to the NAD(+) site; these read GTT and APNY. Residue histidine 155 is the Proton donor/acceptor of the active site. Histidine 156 lines the (S)-2,3,4,5-tetrahydrodipicolinate pocket. Residue lysine 159 is the Proton donor of the active site. Residue 165–166 coordinates (S)-2,3,4,5-tetrahydrodipicolinate; sequence GT.

This sequence belongs to the DapB family.

The protein localises to the cytoplasm. The enzyme catalyses (S)-2,3,4,5-tetrahydrodipicolinate + NAD(+) + H2O = (2S,4S)-4-hydroxy-2,3,4,5-tetrahydrodipicolinate + NADH + H(+). It carries out the reaction (S)-2,3,4,5-tetrahydrodipicolinate + NADP(+) + H2O = (2S,4S)-4-hydroxy-2,3,4,5-tetrahydrodipicolinate + NADPH + H(+). The protein operates within amino-acid biosynthesis; L-lysine biosynthesis via DAP pathway; (S)-tetrahydrodipicolinate from L-aspartate: step 4/4. In terms of biological role, catalyzes the conversion of 4-hydroxy-tetrahydrodipicolinate (HTPA) to tetrahydrodipicolinate. This Vibrio vulnificus (strain YJ016) protein is 4-hydroxy-tetrahydrodipicolinate reductase.